The sequence spans 39 residues: Photosystem II reaction center protein J (39 aa).

A helical transmembrane segment spans residues 9-29 (LWMVATVGGLAAGGLLILFVF).

The protein belongs to the PsbJ family. As to quaternary structure, PSII is composed of 1 copy each of membrane proteins PsbA, PsbB, PsbC, PsbD, PsbE, PsbF, PsbH, PsbI, PsbJ, PsbK, PsbL, PsbM, PsbT, PsbX, PsbY, PsbZ, Psb30/Ycf12, at least 3 peripheral proteins of the oxygen-evolving complex and a large number of cofactors. It forms dimeric complexes.

It is found in the plastid. The protein localises to the chloroplast thylakoid membrane. Functionally, one of the components of the core complex of photosystem II (PSII). PSII is a light-driven water:plastoquinone oxidoreductase that uses light energy to abstract electrons from H(2)O, generating O(2) and a proton gradient subsequently used for ATP formation. It consists of a core antenna complex that captures photons, and an electron transfer chain that converts photonic excitation into a charge separation. This chain is Photosystem II reaction center protein J, found in Emiliania huxleyi (Coccolithophore).